The following is a 623-amino-acid chain: Interleukin-27 receptor subunit alpha (623 aa).

An N-terminal signal peptide occupies residues 1–24 (MNRLRVARLTPLELLLSLMSLLLG). Topologically, residues 25 to 510 (TRPHGSPGPL…HLPDNRIRWK (486 aa)) are extracellular. Fibronectin type-III domains are found at residues 30 to 124 (SPGP…MKPD) and 125 to 225 (TPQI…TPFL). The N-linked (GlcNAc...) asparagine glycan is linked to asparagine 46. A WSXWS motif motif is present at residues 211-215 (WGEWS). Asparagine 296, asparagine 305, asparagine 360, asparagine 368, and asparagine 461 each carry an N-linked (GlcNAc...) asparagine glycan. Fibronectin type-III domains lie at 316–412 (APCD…VPLA) and 413–505 (GPAV…LPDN). A helical transmembrane segment spans residues 511-531 (ALPWFLSLWGLLLMGCGLSLA). The Cytoplasmic segment spans residues 532–623 (STRCLQARCL…PTPEELGLLV (92 aa)). The Box 1 motif signature appears at 552-560 (IWERVPDPA).

Belongs to the type I cytokine receptor family. Type 2 subfamily. As to expression, expressed in CD4+ and CD8+ T-cells, B-cells, natural killer cells and macrophages. Highest levels in CD4+ T-cells and natural killer cells. Expression highest in Th0 cells.

It localises to the membrane. Functionally, receptor for IL27. Requires IL6ST/GP130 to mediate signal transduction in response to IL27. This signaling system acts through STAT3 and STAT1. Involved in the regulation of Th1-type immune responses. Also appears to be involved in innate defense mechanisms. The protein is Interleukin-27 receptor subunit alpha (Il27ra) of Mus musculus (Mouse).